The sequence spans 262 residues: tRNA pseudouridine synthase A 2 (262 aa).

D66 serves as the catalytic Nucleophile. Position 125 (Y125) interacts with substrate.

This sequence belongs to the tRNA pseudouridine synthase TruA family. In terms of assembly, homodimer.

It catalyses the reaction uridine(38/39/40) in tRNA = pseudouridine(38/39/40) in tRNA. Its function is as follows. Formation of pseudouridine at positions 38, 39 and 40 in the anticodon stem and loop of transfer RNAs. The protein is tRNA pseudouridine synthase A 2 of Protochlamydia amoebophila (strain UWE25).